The following is a 398-amino-acid chain: Acetate kinase (398 aa).

Asparagine 10 lines the Mg(2+) pocket. An ATP-binding site is contributed by lysine 17. Arginine 91 provides a ligand contact to substrate. Aspartate 148 acts as the Proton donor/acceptor in catalysis. Residues 208–212 (HLGNG), 283–285 (DCR), and 331–335 (GIGEN) contribute to the ATP site. Glutamate 385 is a binding site for Mg(2+).

The protein belongs to the acetokinase family. In terms of assembly, homodimer. Mg(2+) serves as cofactor. Requires Mn(2+) as cofactor.

It is found in the cytoplasm. The enzyme catalyses acetate + ATP = acetyl phosphate + ADP. The protein operates within metabolic intermediate biosynthesis; acetyl-CoA biosynthesis; acetyl-CoA from acetate: step 1/2. Catalyzes the formation of acetyl phosphate from acetate and ATP. Can also catalyze the reverse reaction. This chain is Acetate kinase, found in Shewanella woodyi (strain ATCC 51908 / MS32).